The primary structure comprises 447 residues: tRNA-2-methylthio-N(6)-dimethylallyladenosine synthase (447 aa).

The MTTase N-terminal domain occupies 1-116; it reads MYIRTFGCQM…LPDLIKRRRA (116 aa). [4Fe-4S] cluster-binding residues include Cys-8, Cys-45, Cys-79, Cys-153, Cys-157, and Cys-160. Positions 139–372 constitute a Radical SAM core domain; the sequence is RVDGATAFVS…QALINQQAAA (234 aa). Residues 375–438 form the TRAM domain; sequence QGMIGTRQRV…TNSLRGRVAG (64 aa).

Belongs to the methylthiotransferase family. MiaB subfamily. Monomer. Requires [4Fe-4S] cluster as cofactor.

The protein localises to the cytoplasm. It carries out the reaction N(6)-dimethylallyladenosine(37) in tRNA + (sulfur carrier)-SH + AH2 + 2 S-adenosyl-L-methionine = 2-methylsulfanyl-N(6)-dimethylallyladenosine(37) in tRNA + (sulfur carrier)-H + 5'-deoxyadenosine + L-methionine + A + S-adenosyl-L-homocysteine + 2 H(+). Its function is as follows. Catalyzes the methylthiolation of N6-(dimethylallyl)adenosine (i(6)A), leading to the formation of 2-methylthio-N6-(dimethylallyl)adenosine (ms(2)i(6)A) at position 37 in tRNAs that read codons beginning with uridine. This chain is tRNA-2-methylthio-N(6)-dimethylallyladenosine synthase, found in Bordetella pertussis (strain Tohama I / ATCC BAA-589 / NCTC 13251).